The following is a 1216-amino-acid chain: MRVSLTEFLVLAQVVTTLQPITIKVDFHEVKHHESIGDYVELVEGKNRDISLTCYGQHKNLKIEPPKREEHAGFPEIGIRTSAEWKKNEYWFLLKNVRQCDTGSYYCVSDEFKESMLQNTVHIFVRKLDIFVPLKTIYHEHNGSEIIIPCKTTKFVDTKNVELYVNQVKLNSALQGYDQRYGFKLTKNMYTMKPNSTVFFECKYTNDSNQDLDYYISNSDPDATLIDQYFFYWEKSNDVPYVGNNYSITCHLVYIGSDSLRPLNHQEIVLECPQNQCDGGYNNQSAHEIEKRSSGLRFGDPSSQDIVEKNTMLRYDRLSVYDRKTSRTVNFQNLTSEDSGIYRCTWRNRSKTNIVLDYDLNFNQKGTQIKIIETSKQRLKMRKNESTLLFVKFAVFPINKKNYTAKWSRLYNSTVEGGQQVETIRNGFFRQITTKTSGRNVFLETLNLKSPKIEMSGIYVLSISNMDIVQQVKWIIEVENDEPNAQLTIRDPLTLNISNQLFLPLNTNLSIFCLAVSSSPTDVIFEYRTDENEWFRGFYKNKLRKIDDTFEKGFIYNFVLAKRTDFKCINVKKKKTSTKFITVTSNANKTFHEIEKSVNATKTEPSDIIFEGDNVRLTCVVPYGAVEFDVFWKFENPKMLKYTTFPAMHPVKDRYKRVILNVRNITIDFTGTYYCIVKNKEFEHRFETSISVEKVSPPFLLNNNSRSIISASNGQMFDINCKVNGVPTPDYTWFKDGYPYTKGKVIGNALHVSKAEKRDNGIFWCSATNRAGTTIDYIEVKVAGASSSSFFWLFITFFAFVVVGIVVSLLWKLFGQKDLKPSELSLNNLKRATDEYQKYTVSEKINNLPVEERIDYLTYNEDYEIDLENLEILETLGSGQFGIVKKGYLNMASSKNFGFESRLSVAIKSSTDSSNMELQKMFFEELKLMCAIPKHPNVLSLVGAVTKNMEIGELFIVTELIDGGNLREFLRERRDVFANELVEKGYIFLTNVRENVPKREVEKEQLLIDEFNSLCTSDLLSIGLQIANGMDWLANIPCVHRDLACRNVLISKTKIIRIADFGLAKKHTDKAYYRVRESLDTPLPVRWMPLESITDLTFTQKSDVWSYGICLYEIFTLGGTPYPDCPNFSLVEYIKTGNINKRPSNCHKDVYKIMKMCWQASPDDRPTFAECIKLFKNHIQYFASKLLQQIEKDLECEKNNQQKFHYWVQKPTQLFF.

Residues 1 to 789 (MRVSLTEFLV…VKVAGASSSS (789 aa)) are Extracellular-facing. N-linked (GlcNAc...) asparagine glycosylation is found at Asn-142, Asn-195, Asn-206, Asn-245, Asn-283, Asn-333, Asn-348, Asn-384, Asn-402, Asn-412, Asn-496, Asn-508, Asn-588, Asn-599, Asn-664, and Asn-703. Ig-like C2-type domains follow at residues 596–691 (KSVN…TSIS) and 697–783 (PPFL…VKVA). An intrachain disulfide couples Cys-619 to Cys-675. A disulfide bridge links Cys-721 with Cys-765. A helical membrane pass occupies residues 790 to 810 (FFWLFITFFAFVVVGIVVSLL). The Cytoplasmic portion of the chain corresponds to 811–1216 (WKLFGQKDLK…WVQKPTQLFF (406 aa)). One can recognise a Protein kinase domain in the interval 870 to 1181 (LEILETLGSG…IKLFKNHIQY (312 aa)). Residues 876-884 (LGSGQFGIV) and Lys-908 each bind ATP. The active-site Proton acceptor is Asp-1042.

It belongs to the protein kinase superfamily. Tyr protein kinase family.

Its subcellular location is the cell membrane. The catalysed reaction is L-tyrosyl-[protein] + ATP = O-phospho-L-tyrosyl-[protein] + ADP + H(+). Receptor tyrosine kinase which may be involved, downstream of pvf-1, in the positioning of ray 1, the most anterior ray sensillum in the male tail. The protein is Tyrosine-protein kinase receptor ver-4 of Caenorhabditis elegans.